The chain runs to 413 residues: Protein trichome birefringence-like 31 (413 aa).

Residues 12–34 form a helical; Signal-anchor for type II membrane protein membrane-spanning segment; it reads IQSIFQVVLVSLLVLGSVRWILD. The short motif at 141 to 143 is the GDS motif element; sequence GDS. The short motif at 384–398 is the DCXHWCLPGXXDXWN motif element; sequence DCIHWCLPGVPDTWN.

The protein belongs to the PC-esterase family. TBL subfamily.

Its subcellular location is the membrane. In terms of biological role, may act as a bridging protein that binds pectin and other cell wall polysaccharides. Probably involved in maintaining esterification of pectins. May be involved in the specific O-acetylation of cell wall polymers. This is Protein trichome birefringence-like 31 (TBL31) from Arabidopsis thaliana (Mouse-ear cress).